We begin with the raw amino-acid sequence, 432 residues long: MTQLQEARKGIITPEMVQAAELEGITGEELRQKIAIGEAVLPCNINHQGLRPMAVGKGLSTKVNANIGTSDAYPELAPELSKLEIAVAAGVHSIMDLSTGGDIDEIRRRIIQDSPVMVGTVPLYQVMVDTHKAGRGLVEMTDDEIFAGIEKHCRDGADFITVHCGVTLEVIQELREQGRVMDIVSRGGSFITAWMLHHQRQNPLFEQYDRLLNIALHYDVTLSLGDGLRPGCLADATDGPQIKELITLGSLVKRAQEAGVQVMVEGPGHVPLHQIETNMQLAKTLCHNAPFYVLGPLVTDVAPGYDHITSAIGGAIAASSGADFLCYVTPAEHLGLPTEEDVKEGVIAARIAAHAADLVKGIKGAWEWDLEMAKARKALDWPKQIQLSIDPEKAGRMRKAKNEDSQERCTMCGKFCAYQLISDYMGTPFKGC.

Residues asparagine 66, methionine 95, tyrosine 124, histidine 163, 185-187 (SRG), 226-229 (DGLR), and glutamate 265 each bind substrate. Residue histidine 269 coordinates Zn(2+). Substrate is bound at residue tyrosine 292. Histidine 333 contacts Zn(2+). [4Fe-4S] cluster is bound by residues cysteine 409, cysteine 412, and cysteine 416.

This sequence belongs to the ThiC family. It depends on [4Fe-4S] cluster as a cofactor.

It carries out the reaction 5-amino-1-(5-phospho-beta-D-ribosyl)imidazole + S-adenosyl-L-methionine = 4-amino-2-methyl-5-(phosphooxymethyl)pyrimidine + CO + 5'-deoxyadenosine + formate + L-methionine + 3 H(+). It functions in the pathway cofactor biosynthesis; thiamine diphosphate biosynthesis. Functionally, catalyzes the synthesis of the hydroxymethylpyrimidine phosphate (HMP-P) moiety of thiamine from aminoimidazole ribotide (AIR) in a radical S-adenosyl-L-methionine (SAM)-dependent reaction. The polypeptide is Phosphomethylpyrimidine synthase (Desulfitobacterium hafniense (strain DSM 10664 / DCB-2)).